A 227-amino-acid chain; its full sequence is Large ribosomal subunit protein uL3 (227 aa).

A disordered region spans residues 129 to 154 (GMQPVSHGQSDRTRSRGSSGAQGPQK).

It belongs to the universal ribosomal protein uL3 family. In terms of assembly, part of the 50S ribosomal subunit. Forms a cluster with proteins L14 and L19.

One of the primary rRNA binding proteins, it binds directly near the 3'-end of the 23S rRNA, where it nucleates assembly of the 50S subunit. The polypeptide is Large ribosomal subunit protein uL3 (Endomicrobium trichonymphae).